The sequence spans 367 residues: Nodulation protein 10 (367 aa).

The next 11 membrane-spanning stretches (helical) occupy residues 15–37, 46–66, 88–108, 109–129, 155–175, 183–203, 208–228, 245–265, 270–290, 312–332, and 335–355; these read FDLLRLFAACQVMFSHAWNWLHL, VFDLLFSAPGVAIFFLISGFL, IFPALFVNIAVMELALLVTGG, LNVTGILQYLFYFTVYILTAA, VLWTLTVELTFYLTLPMLLEI, GALVVAVAALGSWVMAQHFNI, NPFLSVTAGPTFWIFSMGVLA, WWLATHLAITWWVAGTSAAFI, AAPVDAFRIAVLAGLVLSAAH, MLVMHTLIAIGWVGHWWLWIV, and VGTVALAALSWALIEQPAMKL.

It belongs to the acyltransferase 3 family.

It localises to the cell membrane. Functionally, not known. NodX allows Rhizobium leguminosarum biovar viciae strain TOM to nodulate Afghanistan peas. The protein is Nodulation protein 10 (nodX) of Rhizobium leguminosarum bv. viciae.